We begin with the raw amino-acid sequence, 607 residues long: Coronin-like protein cor-1 (607 aa).

WD repeat units lie at residues 77-117 (AHKA…LNRN), 127-167 (GHQK…ALLE), and 170-209 (GHPD…VVHE). The interval 415-564 (PTAAESVPTQ…VSAASDVGHV (150 aa)) is disordered. Over residues 424–436 (QSYSERPPSSQQP) the composition is skewed to low complexity. Positions 437-447 (SPRPSASPRPR) are enriched in pro residues. Composition is skewed to basic and acidic residues over residues 473–489 (SRTE…DPMK) and 517–533 (AAAE…RTAD). Residues 544 to 559 (SSRASASPRGSVSAAS) show a composition bias toward low complexity. Residues 563 to 602 (HVPQNMDELLEDLMKMKAVLRQHERRIRMLEEEIADRNMS) are a coiled coil.

The protein belongs to the WD repeat coronin family.

It is found in the cytoplasm. The protein resides in the cytoskeleton. Its function is as follows. Required to direct the migration of Q neuroblasts along the anterior axis of the body during larval development. This is dependent on its asymmetric expression in Q neuroblasts. In Caenorhabditis elegans, this protein is Coronin-like protein cor-1 (cor-1).